Reading from the N-terminus, the 219-residue chain is Uracil-DNA glycosylase (219 aa).

Asp61 serves as the catalytic Proton acceptor.

This sequence belongs to the uracil-DNA glycosylase (UDG) superfamily. UNG family.

It is found in the cytoplasm. It catalyses the reaction Hydrolyzes single-stranded DNA or mismatched double-stranded DNA and polynucleotides, releasing free uracil.. Its function is as follows. Excises uracil residues from the DNA which can arise as a result of misincorporation of dUMP residues by DNA polymerase or due to deamination of cytosine. This Haemophilus influenzae (strain 86-028NP) protein is Uracil-DNA glycosylase.